Reading from the N-terminus, the 1159-residue chain is ABC transporter G family member 24 (1159 aa).

Helical transmembrane passes span 11–31 and 415–435; these read FNSI…GNNC and VGSG…FLIF. The ABC transporter domain maps to 454 to 707; sequence LSFHNISCYV…FIKQKIAGMT (254 aa). 497–504 is a binding site for ATP; sequence GLSGSGKT. The tract at residues 752–846 is disordered; sequence QSTSPALSSN…DNNNKNNDDD (95 aa). Composition is skewed to low complexity over residues 759-768 and 775-784; these read SSNSNNSDIN and INNPHNQNIH. Basic residues predominate over residues 785 to 795; the sequence is HQQHHHHHRHI. The span at 822–841 shows a compositional bias: low complexity; it reads DNINNNNNNNKVKNNDNNNK. One can recognise an ABC transmembrane type-2 domain in the interval 902–1154; sequence FLLRTTYFVH…LLAYVFLRFL (253 aa). 6 helical membrane-spanning segments follow: residues 909–929, 937–957, 1005–1025, 1047–1067, 1074–1094, and 1135–1155; these read FVHI…PANL, FGAM…SLDL, YMIG…SLVL, ANMV…FLLA, YLIG…PVVN, and VLLG…RFLV.

This sequence belongs to the ABC transporter superfamily. ABCG family. Eye pigment precursor importer (TC 3.A.1.204) subfamily.

Its subcellular location is the membrane. The polypeptide is ABC transporter G family member 24 (abcG24) (Dictyostelium discoideum (Social amoeba)).